The primary structure comprises 481 residues: MANVTYTDTQLLIDGEWVDAASGKTIDVVNPATGKPIGRVAHAGIADLDRALAAAQSGFEAWRKVPAHERAATMRKAAALVRERADAIAQLMTQEQGKPLTEARVEVLSAADIIEWFADEGRRVYGRIVPPRNLGAQQTVVKEPVGPVAAFTPWNFPVNQVVRKLSAALATGCSFLVKAPEETPASPAALLRAFVDAGVPAGVIGLVYGDPAEISSYLIPHPVIRKVTFTGSTPVGKQLASLAGLHMKRATMELGGHAPVIVAEDADVALAVKAAGGAKFRNAGQVCISPTRFLVHNSIRDEFTRALVKHAEGLKVGNGLEEGTTLGALANPRRLTAMASVIDNARKVGASIETGGERIGSEGNFFAPTVIANVPLDADVFNNEPFGPVAAIRGFDKLEEAIAEANRLPFGLAGYAFTRSFANVHLLTQRLEVGMLWINQPATPWPEMPFGGVKDSGYGSEGGPEALEPYLVTKSVTVMAV.

NADP(+) contacts are provided by residues 154 to 155 (WN), 178 to 181 (KAPE), and 231 to 232 (GS). The active-site Proton acceptor is E253. Position 254 (L254) interacts with NADP(+). C287 serves as the catalytic Nucleophile. E384 serves as a coordination point for NADP(+).

The protein belongs to the aldehyde dehydrogenase family. In terms of assembly, homotetramer.

The enzyme catalyses 2,5-dioxopentanoate + NADP(+) + H2O = 2-oxoglutarate + NADPH + 2 H(+). It carries out the reaction 2,5-dioxopentanoate + NAD(+) + H2O = 2-oxoglutarate + NADH + 2 H(+). It catalyses the reaction succinate semialdehyde + NAD(+) + H2O = succinate + NADH + 2 H(+). In terms of biological role, catalyzes the NAD(P)(+)-dependent oxidation of alpha-ketoglutaric semialdehyde (alphaKGSA) to alpha-ketoglutarate. Is involved in a degradation pathway of L-arabinose that allows A.brasilense to grow on L-arabinose as a sole carbon source. Prefers NAD(+) to NADP(+) as a cosubstrate. Displays broad substrate specificity: exhibits the highest activity with alphaKGSA and succinic semialdehyde as substrates, but to a lesser extent, is also active with glutaraldehyde, benzaldehyde, and a number of aldehydes from C3 to C8. The polypeptide is Alpha-ketoglutaric semialdehyde dehydrogenase 1 (araE) (Azospirillum brasilense).